A 331-amino-acid chain; its full sequence is Tagatose 1,6-diphosphate aldolase 2 (331 aa).

Belongs to the aldolase LacD family.

It carries out the reaction D-tagatofuranose 1,6-bisphosphate = D-glyceraldehyde 3-phosphate + dihydroxyacetone phosphate. The protein operates within carbohydrate metabolism; D-tagatose 6-phosphate degradation; D-glyceraldehyde 3-phosphate and glycerone phosphate from D-tagatose 6-phosphate: step 2/2. This Enterococcus faecalis (strain ATCC 700802 / V583) protein is Tagatose 1,6-diphosphate aldolase 2 (lacD2).